A 439-amino-acid polypeptide reads, in one-letter code: 23S rRNA (uracil(1939)-C(5))-methyltransferase RlmD (439 aa).

In terms of domain architecture, TRAM spans 5-63; that stretch reads RKLEHKTYKLNIESFSHEGRGIAHFEDKIIFVSDALPGELVIANRTFSCAKFEEADAKE. [4Fe-4S] cluster contacts are provided by C76, C82, C85, and C164. Residues Q271, F300, N305, E321, D348, and D370 each coordinate S-adenosyl-L-methionine. Residue C396 is the Nucleophile of the active site.

Belongs to the class I-like SAM-binding methyltransferase superfamily. RNA M5U methyltransferase family. RlmD subfamily.

The enzyme catalyses uridine(1939) in 23S rRNA + S-adenosyl-L-methionine = 5-methyluridine(1939) in 23S rRNA + S-adenosyl-L-homocysteine + H(+). Functionally, catalyzes the formation of 5-methyl-uridine at position 1939 (m5U1939) in 23S rRNA. The sequence is that of 23S rRNA (uracil(1939)-C(5))-methyltransferase RlmD from Vesicomyosocius okutanii subsp. Calyptogena okutanii (strain HA).